A 429-amino-acid polypeptide reads, in one-letter code: MFS-type efflux pump MSMEG_3705 (429 aa).

Transmembrane regions (helical) follow at residues 21–41 (AWAA…DRFL), 59–79 (AIGV…GIAV), 86–106 (GAFG…TMLG), 115–137 (LALT…HAYV), 150–170 (LAVI…GGGL), 181–201 (FVIM…VVGV), 228–248 (FLIV…LTTF), 264–284 (VGVE…LIVG), 299–319 (LWIV…AFVV), 327–347 (LFLA…IAAI), 361–381 (AMFL…VGML), and 397–417 (ALLL…WLAS).

It belongs to the major facilitator superfamily.

Its subcellular location is the cell inner membrane. Probably plays a role in bacterial growth and resistance to antibiotics. The sequence is that of MFS-type efflux pump MSMEG_3705 from Mycolicibacterium smegmatis (strain ATCC 700084 / mc(2)155) (Mycobacterium smegmatis).